The chain runs to 560 residues: Muellerian-inhibiting factor (560 aa).

The first 24 residues, 1-24 (MRDLPLTSLALVLSALGALLGTEA), serve as a signal peptide directing secretion. Residues 25–451 (LRAEEPAVGT…DPRGPGRAQR (427 aa)) constitute a propeptide that is removed on maturation. N-linked (GlcNAc...) asparagine glycosylation occurs at Asn64. The segment at 259-287 (PLPAHGQLDTVPFPPPRPSAELEESPPSA) is disordered. An N-linked (GlcNAc...) asparagine glycan is attached at Asn329. 3 disulfide bridges follow: Cys462/Cys526, Cys488/Cys557, and Cys492/Cys559.

Belongs to the TGF-beta family. As to quaternary structure, homodimer; disulfide-linked. In terms of processing, preproprotein is proteolytically processed to generate N- and C-terminal cleavage products that homodimerize and associate to form a biologically active non-covalent complex. Binding of the non-covalent complex to AMHR2 induces dissociation of the pro-region from the mature C-terminal dimer. The N-terminal portion of the protein, despite having no intrinsic activity, has the role of amplifying the activity of the C-terminus. In ovaries, AMH is detected in granulosa cells of early growing follicles.

It localises to the secreted. Plays an important role in several reproductive functions. Induces Muellerian duct regression during male fetal sexual differentiation. Also plays a role in Leydig cell differentiation and function. In female acts as a negative regulator of the primordial to primary follicle transition and decreases FSH sensitivity of growing follicles. AMH signals by binding to a specific type-II receptor, AMHR2, that heterodimerizes with type-I receptors (ACVR1 and BMPR1A), and recruiting SMAD proteins that are translocated to the nucleus to regulate target gene expression. The chain is Muellerian-inhibiting factor from Homo sapiens (Human).